Consider the following 88-residue polypeptide: UPF0250 protein Sbal_3280 (88 aa).

It belongs to the UPF0250 family.

The chain is UPF0250 protein Sbal_3280 from Shewanella baltica (strain OS155 / ATCC BAA-1091).